Here is a 203-residue protein sequence, read N- to C-terminus: Chemotactic transduction protein ChpE (203 aa).

A run of 5 helical transmembrane segments spans residues 3–23, 46–66, 69–89, 123–143, and 149–169; these read AIFL…GAVF, LIGD…LLGY, VRIP…VQGL, NVVY…GTPN, and VFFA…AALV.

Belongs to the Rht family.

The protein localises to the cell membrane. The polypeptide is Chemotactic transduction protein ChpE (chpE) (Pseudomonas aeruginosa (strain ATCC 15692 / DSM 22644 / CIP 104116 / JCM 14847 / LMG 12228 / 1C / PRS 101 / PAO1)).